The chain runs to 473 residues: Photosystem II CP43 reaction center protein (473 aa).

A propeptide spanning residues 1–14 (MKTLYSLRRFYHVE) is cleaved from the precursor. An N-acetylthreonine modification is found at threonine 15. Position 15 is a phosphothreonine (threonine 15). 5 consecutive transmembrane segments (helical) span residues 69 to 93 (LFEVAHFVPEKPMYEQGLILLPHLA), 134 to 155 (LLGPETLEESFPFFGYVWKDRN), 178 to 200 (KALYFGGVYDTWAPGGGDVRKIT), 255 to 275 (KPFAWARRALVWSGEAYLSYS), and 291 to 312 (WFNNTAYPSEFYGPTGPEASQA). Glutamate 367 contributes to the [CaMn4O5] cluster binding site. The chain crosses the membrane as a helical span at residues 447-471 (RARAAAAGFEKGIDRDFEPVLSMTP).

The protein belongs to the PsbB/PsbC family. PsbC subfamily. PSII is composed of 1 copy each of membrane proteins PsbA, PsbB, PsbC, PsbD, PsbE, PsbF, PsbH, PsbI, PsbJ, PsbK, PsbL, PsbM, PsbT, PsbX, PsbY, PsbZ, Psb30/Ycf12, at least 3 peripheral proteins of the oxygen-evolving complex and a large number of cofactors. It forms dimeric complexes. It depends on Binds multiple chlorophylls and provides some of the ligands for the Ca-4Mn-5O cluster of the oxygen-evolving complex. It may also provide a ligand for a Cl- that is required for oxygen evolution. PSII binds additional chlorophylls, carotenoids and specific lipids. as a cofactor.

It localises to the plastid. The protein localises to the chloroplast thylakoid membrane. In terms of biological role, one of the components of the core complex of photosystem II (PSII). It binds chlorophyll and helps catalyze the primary light-induced photochemical processes of PSII. PSII is a light-driven water:plastoquinone oxidoreductase, using light energy to abstract electrons from H(2)O, generating O(2) and a proton gradient subsequently used for ATP formation. The polypeptide is Photosystem II CP43 reaction center protein (Arabis hirsuta (Hairy rock-cress)).